The primary structure comprises 123 residues: Small ribosomal subunit protein uS12 (123 aa).

A 3-methylthioaspartic acid modification is found at Asp89. Residues 104-123 (SVGVKDRKKSRSKYGAKRPK) form a disordered region. The span at 109–123 (DRKKSRSKYGAKRPK) shows a compositional bias: basic residues.

This sequence belongs to the universal ribosomal protein uS12 family. As to quaternary structure, part of the 30S ribosomal subunit. Contacts proteins S8 and S17. May interact with IF1 in the 30S initiation complex.

With S4 and S5 plays an important role in translational accuracy. In terms of biological role, interacts with and stabilizes bases of the 16S rRNA that are involved in tRNA selection in the A site and with the mRNA backbone. Located at the interface of the 30S and 50S subunits, it traverses the body of the 30S subunit contacting proteins on the other side and probably holding the rRNA structure together. The combined cluster of proteins S8, S12 and S17 appears to hold together the shoulder and platform of the 30S subunit. This Pelobacter propionicus (strain DSM 2379 / NBRC 103807 / OttBd1) protein is Small ribosomal subunit protein uS12.